The sequence spans 414 residues: L-cysteine:1D-myo-inositol 2-amino-2-deoxy-alpha-D-glucopyranoside ligase (414 aa).

A Zn(2+)-binding site is contributed by Cys-43. Residues 43–46 (CGIT), Thr-58, and 81–83 (NVT) contribute to the L-cysteinyl-5'-AMP site. The 'HIGH' region motif lies at 45–55 (ITPYDATHLGH). The 'ERGGDP' region signature appears at 187-192 (ERGGDP). L-cysteinyl-5'-AMP is bound at residue Trp-227. Cys-231 lines the Zn(2+) pocket. Residue 249-251 (GSD) participates in L-cysteinyl-5'-AMP binding. His-256 serves as a coordination point for Zn(2+). Position 283 (Ile-283) interacts with L-cysteinyl-5'-AMP. Residues 289–293 (KMSKS) carry the 'KMSKS' region motif.

It belongs to the class-I aminoacyl-tRNA synthetase family. MshC subfamily. As to quaternary structure, monomer. Zn(2+) serves as cofactor.

It catalyses the reaction 1D-myo-inositol 2-amino-2-deoxy-alpha-D-glucopyranoside + L-cysteine + ATP = 1D-myo-inositol 2-(L-cysteinylamino)-2-deoxy-alpha-D-glucopyranoside + AMP + diphosphate + H(+). Catalyzes the ATP-dependent condensation of GlcN-Ins and L-cysteine to form L-Cys-GlcN-Ins. The sequence is that of L-cysteine:1D-myo-inositol 2-amino-2-deoxy-alpha-D-glucopyranoside ligase from Tsukamurella paurometabola (strain ATCC 8368 / DSM 20162 / CCUG 35730 / CIP 100753 / JCM 10117 / KCTC 9821 / NBRC 16120 / NCIMB 702349 / NCTC 13040) (Corynebacterium paurometabolum).